A 95-amino-acid chain; its full sequence is Small ribosomal subunit protein uS19 (95 aa).

The protein belongs to the universal ribosomal protein uS19 family.

Functionally, protein S19 forms a complex with S13 that binds strongly to the 16S ribosomal RNA. The sequence is that of Small ribosomal subunit protein uS19 from Clostridium kluyveri (strain NBRC 12016).